The following is a 403-amino-acid chain: Dual-specificity RNA methyltransferase RlmN (403 aa).

The active-site Proton acceptor is Glu121. In terms of domain architecture, Radical SAM core spans 127-375 (ETDRGTLCVS…VRTPRGRDIL (249 aa)). The cysteines at positions 134 and 378 are disulfide-linked. [4Fe-4S] cluster-binding residues include Cys141, Cys145, and Cys148. S-adenosyl-L-methionine is bound by residues 204–205 (GE), Ser236, 258–260 (SLH), and Asn335. The S-methylcysteine intermediate role is filled by Cys378.

The protein belongs to the radical SAM superfamily. RlmN family. It depends on [4Fe-4S] cluster as a cofactor.

The protein resides in the cytoplasm. It catalyses the reaction adenosine(2503) in 23S rRNA + 2 reduced [2Fe-2S]-[ferredoxin] + 2 S-adenosyl-L-methionine = 2-methyladenosine(2503) in 23S rRNA + 5'-deoxyadenosine + L-methionine + 2 oxidized [2Fe-2S]-[ferredoxin] + S-adenosyl-L-homocysteine. The catalysed reaction is adenosine(37) in tRNA + 2 reduced [2Fe-2S]-[ferredoxin] + 2 S-adenosyl-L-methionine = 2-methyladenosine(37) in tRNA + 5'-deoxyadenosine + L-methionine + 2 oxidized [2Fe-2S]-[ferredoxin] + S-adenosyl-L-homocysteine. In terms of biological role, specifically methylates position 2 of adenine 2503 in 23S rRNA and position 2 of adenine 37 in tRNAs. m2A2503 modification seems to play a crucial role in the proofreading step occurring at the peptidyl transferase center and thus would serve to optimize ribosomal fidelity. The sequence is that of Dual-specificity RNA methyltransferase RlmN from Rhodopseudomonas palustris (strain BisA53).